The primary structure comprises 634 residues: Kelch-like protein 22 (634 aa).

N-acetylalanine is present on Ala-2. In terms of domain architecture, BTB spans 50-117 (FDVVLVVEGK…IYTSELELSL (68 aa)). 6 Kelch repeats span residues 299-349 (CVVG…VLNN), 350-399 (FVYL…VVGK), 400-446 (YIYA…TLQG), 448-493 (MYIT…ALLD), 495-544 (LFVI…VLDS), and 545-593 (RIYV…VLTL). Thr-463 is subject to Phosphothreonine. Tyr-466 carries the post-translational modification Phosphotyrosine. Position 475 is a phosphothreonine (Thr-475). Residues 600–634 (EQPRGTPNRSQADADFASEVMSVSDWEEFDNSSED) are disordered. Thr-605 carries the post-translational modification Phosphothreonine. Acidic residues predominate over residues 624 to 634 (DWEEFDNSSED).

Component of the BCR(KLHL22) E3 ubiquitin ligase complex, at least composed of CUL3, KLHL22 and RBX1. Interacts with PLK1. Interacts with DEPDC5 (via DEP domain); the interaction depends on amino acid availability. Interacts with YWHAE; required for the nuclear localization of KLHL22 upon amino acid starvation.

The protein resides in the cytoplasm. It localises to the cytosol. It is found in the cytoskeleton. The protein localises to the microtubule organizing center. Its subcellular location is the centrosome. The protein resides in the spindle. It localises to the nucleus. It is found in the lysosome. The protein operates within protein modification; protein ubiquitination. Its function is as follows. Substrate-specific adapter of a BCR (BTB-CUL3-RBX1) E3 ubiquitin ligase complex required for chromosome alignment and localization of PLK1 at kinetochores. The BCR(KLHL22) ubiquitin ligase complex mediates monoubiquitination of PLK1, leading to PLK1 dissociation from phosphoreceptor proteins and subsequent removal from kinetochores, allowing silencing of the spindle assembly checkpoint (SAC) and chromosome segregation. Monoubiquitination of PLK1 does not lead to PLK1 degradation. The BCR(KLHL22) ubiquitin ligase complex is also responsible for the amino acid-stimulated 'Lys-48' polyubiquitination and proteasomal degradation of DEPDC5. Through the degradation of DEPDC5, releases the GATOR1 complex-mediated inhibition of the TORC1 pathway. It is therefore an amino acid-dependent activator within the amino acid-sensing branch of the TORC1 pathway, indirectly regulating different cellular processes including cell growth and autophagy. In Mus musculus (Mouse), this protein is Kelch-like protein 22.